The chain runs to 746 residues: Protein C-mannosyl-transferase DPY19L1 (746 aa).

The interval 1 to 68 (MVLQARSKHR…RAGTAAPAPD (68 aa)) is disordered. 2 positions are modified to phosphoserine: Ser-28 and Ser-31. A compositionally biased stretch (low complexity) spans 59-68 (RAGTAAPAPD). The next 11 helical transmembrane spans lie at 137-159 (LYYS…WMIM), 227-247 (ACFY…LFFI), 257-279 (LGGV…VMWT), 307-325 (LCRG…FMLP), 331-350 (FVLL…GYID), 357-374 (IIYM…LMFG), 380-396 (TSYY…MLAM), 405-425 (VSEL…TVIL), 481-501 (LLLP…FNDM), 520-540 (GELV…VLIM), and 562-582 (LFGW…ILAA).

It belongs to the dpy-19 family.

Its subcellular location is the endoplasmic reticulum membrane. It carries out the reaction L-tryptophyl-[protein] + a di-trans,poly-cis-dolichyl beta-D-mannosyl phosphate = C-alpha-D-mannosyl-L-tryptophyl-[protein] + a di-trans,poly-cis-dolichyl phosphate + H(+). It functions in the pathway protein modification; protein glycosylation. In terms of biological role, C-mannosyltransferase that mediates the C-mannosylation tryptophan residues on target proteins. The reaction occurs on the luminal side of the endoplasmic reticulum and involves the transfer of a mannose unit from a dolichylphosphate mannose (Dol-P-Man) donor to an acceptor protein containing a WxxW consensus sequence. C-mannosylates the first two tryptophans in the WxxWxxWxxC sequence motif in thrombospondin (TSP) type-1 repeats of UNC5A. Regulates neurite extension during development. This chain is Protein C-mannosyl-transferase DPY19L1 (Dpy19l1), found in Mus musculus (Mouse).